The chain runs to 226 residues: MISSHPEIELAGFIEQTCLKPTATADDVRQMCWEAQRYRFAAVCVAPVYAPLAVELLHKQKPQVFTVVGFPLGLATAPCKLFEAQEAAARGVTGLEVMVNLGAIKSGHYNAIYEELGQIVDAVGCEVRAILELNLLDATERRHVAEVCLDVGVTALKTSAGWSGPVRPEDILGLRRILRNQLGIKVAGGIHTLNQALELLAAGANRLGTGRGVEILREQHALGKTA.

Catalysis depends on glutamate 96, which acts as the Proton donor/acceptor. The Schiff-base intermediate with acetaldehyde role is filled by lysine 157. The Proton donor/acceptor role is filled by lysine 185.

It belongs to the DeoC/FbaB aldolase family. DeoC type 1 subfamily.

It is found in the cytoplasm. The enzyme catalyses 2-deoxy-D-ribose 5-phosphate = D-glyceraldehyde 3-phosphate + acetaldehyde. Its pathway is carbohydrate degradation; 2-deoxy-D-ribose 1-phosphate degradation; D-glyceraldehyde 3-phosphate and acetaldehyde from 2-deoxy-alpha-D-ribose 1-phosphate: step 2/2. In terms of biological role, catalyzes a reversible aldol reaction between acetaldehyde and D-glyceraldehyde 3-phosphate to generate 2-deoxy-D-ribose 5-phosphate. The sequence is that of Deoxyribose-phosphate aldolase from Gloeobacter violaceus (strain ATCC 29082 / PCC 7421).